The primary structure comprises 2531 residues: Neurogenic locus notch homolog protein 1 (2531 aa).

Positions 1–18 (MPRLLAPLLCLTLLPALA) are cleaved as a signal peptide. The Extracellular segment spans residues 19 to 1725 (ARGLRCSQPS…VEPPLPSQLH (1707 aa)). 4 consecutive EGF-like domains span residues 20-58 (RGLRCSQPSGTCLNGGRCEVANGTEACVCSGAFVGQRCQ), 59-99 (DPSP…PLCL), 102-139 (LANACLANPCRNGGTCDLLTLTEYKCRCPPGWSGKSCQ), and 140-176 (QADPCASNPCANGGQCLPFESSYICGCPPGFHGPTCR). Intrachain disulfides connect Cys24–Cys37, Cys31–Cys46, Cys48–Cys57, Cys63–Cys74, Cys68–Cys87, Cys89–Cys98, Cys106–Cys117, Cys111–Cys127, Cys129–Cys138, Cys144–Cys155, Cys149–Cys164, Cys166–Cys175, Cys182–Cys195, Cys189–Cys204, Cys206–Cys215, Cys222–Cys233, Cys227–Cys243, Cys245–Cys254, Cys261–Cys272, Cys266–Cys281, Cys283–Cys292, Cys299–Cys312, Cys306–Cys321, Cys323–Cys332, Cys339–Cys350, Cys344–Cys359, Cys361–Cys370, Cys376–Cys387, Cys381–Cys398, Cys400–Cys409, Cys416–Cys429, Cys423–Cys438, and Cys440–Cys449. Asn41 carries an N-linked (GlcNAc...) asparagine glycan. An O-linked (Glc...) serine glycan is attached at Ser65. O-linked (Fuc...) threonine glycosylation is present at Thr73. The O-linked (Fuc...) threonine glycan is linked to Thr116. O-linked (Glc...) serine glycosylation occurs at Ser146. One can recognise an EGF-like 5; calcium-binding domain in the interval 178–216 (DVNECSQNPGLCRHGGTCHNEIGSYRCACRATHTGPHCE). Thr194 carries O-linked (Fuc...) threonine glycosylation. The 38-residue stretch at 218 to 255 (PYVPCSPSPCQNGGTCRPTGDTTHECACLPGFAGQNCE) folds into the EGF-like 6 domain. Thr232 carries O-linked (Fuc...) threonine; alternate glycosylation. Thr232 carries an O-linked (GalNAc...) threonine; alternate glycan. The EGF-like 7; calcium-binding domain occupies 257–293 (NVDDCPGNNCKNGGACVDGVNTYNCRCPPEWTGQYCT). One can recognise an EGF-like 8; calcium-binding domain in the interval 295-333 (DVDECQLMPNACQNGGTCHNSHGGYNCVCVNGWTGEDCS). O-linked (Fuc...) threonine glycosylation is present at Thr311. One can recognise an EGF-like 9; calcium-binding domain in the interval 335–371 (NIDDCASAACFQGATCHDRVASFYCECPHGRTGLLCH). The O-linked (Glc...) serine glycan is linked to Ser341. The O-linked (Fuc...) threonine glycan is linked to Thr349. In terms of domain architecture, EGF-like 10 spans 372–410 (LNDACISNPCNEGSNCDTNPVNGKAICTCPSGYTGPACS). The O-linked (Glc...) serine glycan is linked to Ser378. The EGF-like 11; calcium-binding domain occupies 412-450 (DVDECALGANPCEHAGKCLNTLGSFECQCLQGYTGPRCE). The interval 420-421 (AN) is interaction with DLL4. Residues Thr432 and Ser435 each contribute to the Ca(2+) site. O-linked (Glc...) serine glycosylation is present at Ser435. The interaction with DLL4 stretch occupies residues 448–452 (RCEID). The Ca(2+) site is built by Asp452, Val453, and Glu455. One can recognise an EGF-like 12; calcium-binding domain in the interval 452-488 (DVNECISNPCQNDATCLDQIGEFQCICMPGYEGVYCE). 3 cysteine pairs are disulfide-bonded: Cys456–Cys467, Cys461–Cys476, and Cys478–Cys487. O-linked (Glc...) serine glycosylation occurs at Ser458. Thr466 is a glycosylation site (O-linked (Fuc...) threonine). Positions 469 and 470 each coordinate Ca(2+). Ca(2+)-binding residues include Asn490, Thr491, and Glu493. The region spanning 490 to 526 (NTDECASSPCLHNGRCVDKINEFLCQCPKGFSGHLCQ) is the EGF-like 13; calcium-binding domain. 75 cysteine pairs are disulfide-bonded: Cys494/Cys505, Cys499/Cys514, Cys516/Cys525, Cys532/Cys543, Cys537/Cys552, Cys554/Cys563, Cys570/Cys580, Cys575/Cys589, Cys591/Cys600, Cys607/Cys618, Cys612/Cys627, Cys629/Cys638, Cys645/Cys655, Cys650/Cys664, Cys666/Cys675, Cys682/Cys693, Cys687/Cys702, Cys704/Cys713, Cys720/Cys730, Cys725/Cys739, Cys741/Cys750, Cys757/Cys768, Cys762/Cys777, Cys779/Cys788, Cys795/Cys806, Cys800/Cys815, Cys817/Cys826, Cys833/Cys844, Cys838/Cys855, Cys857/Cys866, Cys873/Cys884, Cys878/Cys893, Cys895/Cys904, Cys911/Cys922, Cys916/Cys931, Cys933/Cys942, Cys949/Cys960, Cys954/Cys969, Cys971/Cys980, Cys987/Cys998, Cys992/Cys1007, Cys1009/Cys1018, Cys1025/Cys1036, Cys1030/Cys1045, Cys1047/Cys1056, Cys1063/Cys1074, Cys1068/Cys1083, Cys1085/Cys1094, Cys1101/Cys1122, Cys1116/Cys1131, Cys1133/Cys1142, Cys1149/Cys1160, Cys1154/Cys1169, Cys1171/Cys1180, Cys1187/Cys1198, Cys1192/Cys1207, Cys1209/Cys1218, Cys1225/Cys1244, Cys1238/Cys1253, Cys1255/Cys1264, Cys1271/Cys1284, Cys1276/Cys1293, Cys1295/Cys1304, Cys1311/Cys1322, Cys1316/Cys1334, Cys1336/Cys1345, Cys1352/Cys1363, Cys1357/Cys1372, Cys1374/Cys1383, Cys1391/Cys1403, Cys1397/Cys1414, Cys1416/Cys1425, Cys1449/Cys1472, Cys1454/Cys1467, and Cys1463/Cys1479. A glycan (O-linked (Glc...) serine) is linked at Ser496. Ca(2+)-binding residues include Asp507 and Lys508. The 37-residue stretch at 528-564 (DVDECASTPCKNGAKCLDGPNTYTCVCTEGYTGTHCE) folds into the EGF-like 14; calcium-binding domain. An O-linked (Glc...) serine glycan is attached at Ser534. An EGF-like 15; calcium-binding domain is found at 566–601 (DIDECDPDPCHYGLCKDGVATFTCLCQPGYTGHHCE). The EGF-like 16; calcium-binding domain occupies 603–639 (NINECHSQPCRHGGTCQDRDNYYLCLCLKGTTGPNCE). A glycan (O-linked (Glc...) serine) is linked at Ser609. The O-linked (Fuc...) threonine glycan is linked to Thr617. The EGF-like 17; calcium-binding domain maps to 641 to 676 (NLDDCASNPCDSGTCLDKIDGYECACEPGYTGSMCN). Ser647 is a glycosylation site (O-linked (Glc...) serine). An EGF-like 18; calcium-binding domain is found at 678-714 (NIDECAGSPCHNGGTCEDGIAGFTCRCPEGYHDPTCL). Thr692 carries O-linked (Fuc...) threonine glycosylation. Positions 716–751 (EVNECNSNPCIHGACRDGLNGYKCDCAPGWSGTNCD) constitute an EGF-like 19; calcium-binding domain. Ser722 carries an O-linked (Glc...) serine glycan. In terms of domain architecture, EGF-like 20; calcium-binding spans 753–789 (NNNECESNPCVNGGTCKDMTSGYVCTCREGFSGPNCQ). An O-linked (Glc...) serine glycan is attached at Ser759. Thr767 carries an O-linked (Fuc...) threonine glycan. Residue Ser784 is glycosylated (O-linked (GlcNAc) serine). In terms of domain architecture, EGF-like 21; calcium-binding spans 791-827 (NINECASNPCLNQGTCIDDVAGYKCNCPLPYTGATCE). Residue Ser797 is glycosylated (O-linked (Glc...) serine). The O-linked (Fuc...) threonine glycan is linked to Thr805. The EGF-like 22 domain maps to 829–867 (VLAPCATSPCKNSGVCKESEDYESFSCVCPTGWQGQTCE). The region spanning 869 to 905 (DINECVKSPCRHGASCQNTNGSYRCLCQAGYTGRNCE) is the EGF-like 23; calcium-binding domain. Asn888 carries N-linked (GlcNAc...) asparagine glycosylation. O-linked (GlcNAc) threonine glycosylation occurs at Thr900. The EGF-like 24 domain occupies 907–943 (DIDDCRPNPCHNGGSCTDGVNAAFCDCLPGFQGAFCE). Ser921 carries an O-linked (Fuc) serine glycan. The EGF-like 25; calcium-binding domain occupies 945-981 (DINECASNPCQNGANCTDCVDSYTCTCPTGFNGIHCE). Ser951 is a glycosylation site (O-linked (Glc...) serine). An N-linked (GlcNAc...) asparagine glycan is attached at Asn959. The region spanning 983–1019 (NTPDCTESSCFNGGTCVDGINSFTCLCPPGFTGSYCQ) is the EGF-like 26 domain. Thr997 carries an O-linked (Fuc...) threonine glycan. Positions 1021–1057 (DVNECDSRPCLHGGTCQDSYGTYKCTCPQGYTGLNCQ) constitute an EGF-like 27; calcium-binding domain. The O-linked (Glc...) serine glycan is linked to Ser1027. Residue Thr1035 is glycosylated (O-linked (Fuc...) threonine). 2 EGF-like domains span residues 1059 to 1095 (LVRWCDSAPCKNGGKCWQTNTQYHCECRSGWTGFNCD) and 1097 to 1143 (LSVS…SYCE). Ser1065 is a glycosylation site (O-linked (Glc...) serine). The region spanning 1145 to 1181 (EVDECSPNPCQNGATCTDYLGGFSCKCVAGYHGSNCS) is the EGF-like 30; calcium-binding domain. Thr1159 is a glycosylation site (O-linked (Fuc...) threonine). Residue Asn1179 is glycosylated (N-linked (GlcNAc...) asparagine). The EGF-like 31; calcium-binding domain occupies 1183–1219 (EINECLSQPCQNGGTCIDLTNTYKCSCPRGTQGVHCE). An O-linked (Glc...) serine glycan is attached at Ser1189. O-linked (Fuc...) threonine glycosylation is present at Thr1197. One can recognise an EGF-like 32; calcium-binding domain in the interval 1221–1265 (NVDDCHPPLDPASRSPKCFNNGTCVDQVGGYTCTCPPGFVGERCE). N-linked (GlcNAc...) asparagine glycosylation occurs at Asn1241. 4 EGF-like domains span residues 1267 to 1305 (DVNECLSNPCDPRGTQNCVQRVNDFHCECRAGHTGRRCE), 1307 to 1346 (VINGCRGKPCRNGGVCAVASNTARGFICRCPAGFEGATCE), 1348 to 1384 (DARTCGSLRCLNGGTCISGPRSPTCLCLGSFTGPECQ), and 1387 to 1426 (ASSPCVGSNPCYNQGTCEPTSESPFYRCLCPAKFNGLLCH). O-linked (Glc...) serine glycosylation is present at Ser1273. The O-linked (Fuc...) threonine glycan is linked to Thr1362. An O-linked (GlcNAc...) threonine glycan is attached at Thr1379. O-linked (Fuc...) threonine; alternate glycosylation is present at Thr1402. A glycan (O-linked (GalNAc...) threonine; alternate) is linked at Thr1402. LNR repeat units lie at residues 1449–1489 (CELP…PWKN), 1490–1531 (CTQS…CNPL), and 1532–1571 (YDQYCKDHFSDGHCDQGCNSAECEWDGLDCAEHVPERLAA). Positions 1457, 1460, 1475, and 1478 each coordinate Ca(2+). Asn1489 carries N-linked (GlcNAc...) asparagine glycosylation. 5 disulfides stabilise this stretch: Cys1490–Cys1514, Cys1496–Cys1509, Cys1505–Cys1521, Cys1536–Cys1549, and Cys1545–Cys1561. The N-linked (GlcNAc...) asparagine glycan is linked to Asn1587. The O-linked (GalNAc...) threonine glycan is linked to Thr1715. The interaction with PSEN1 stretch occupies residues 1718 to 1750 (PPLPSQLHLMYVAAAAFVLLFFVGCGVLLSRKR). A helical transmembrane segment spans residues 1726-1746 (LMYVAAAAFVLLFFVGCGVLL). Residues 1747–2531 (SRKRRRQHGQ…QITHIPEAFK (785 aa)) are Cytoplasmic-facing. A Glycyl lysine isopeptide (Lys-Gly) (interchain with G-Cter in ubiquitin) cross-link involves residue Lys1749. Positions 1770 to 1798 (KKKRREPLGEDSVGLKPLKNASDGALMDD) are disordered. Position 1851 is a phosphothreonine (Thr1851). ANK repeat units lie at residues 1917–1946 (TGETALHLAARYSRSDAAKRLLEASADANI), 1950–1980 (MGRTPLHAAVSADAQGVFQILLRNRATDLDA), 1984–2013 (DGTTPLILAARLAVEGMLEDLINSHADVNA), 2017–2046 (LGKSALHWAAAVNNVDAAVVLLKNGANKDM), and 2050–2079 (KEETPLFLAAREGSYETAKVLLDHFANRDI). Positions 1937 to 1945 (LLEASADAN) are HIF1AN-binding. A (3S)-3-hydroxyasparagine; by HIF1AN modification is found at Asn1945. The segment at 2004 to 2012 (LINSHADVN) is HIF1AN-binding. Asn2012 carries the post-translational modification (3S)-3-hydroxyasparagine; by HIF1AN. Disordered stretches follow at residues 2141–2185 (SATQ…DSSS), 2382–2428 (QPQN…SLPV), and 2440–2531 (PTSL…EAFK). Positions 2382 to 2395 (QPQNLQPPSQPHLS) are enriched in low complexity. Over residues 2440–2478 (PTSLPSSMVPPMTTTQFLTPPSQHSYSSSPVDNTPSHQL) the composition is skewed to polar residues. Residues 2488–2503 (PSPESPDQWSSSSPHS) show a composition bias toward low complexity. Residues 2504–2524 (NISDWSEGISSPPTSMPSQIT) are compositionally biased toward polar residues.

Belongs to the NOTCH family. As to quaternary structure, heterodimer of a C-terminal fragment N(TM) and an N-terminal fragment N(EC) which are probably linked by disulfide bonds. Interacts with DNER, DTX1, DTX2 and RBPJ/RBPSUH. Also interacts with MAML1, MAML2 and MAML3 which act as transcriptional coactivators for NOTCH1. Notch 1 intracellular domain interacts with SNW1; the interaction involves multimerized NOTCH1 NICD and is implicated in a formation of an intermediate preactivation complex which associates with DNA-bound CBF-1/RBPJ. The activated membrane-bound form interacts with AAK1 which promotes NOTCH1 stabilization. Forms a trimeric complex with FBXW7 and SGK1. Interacts with HIF1AN. HIF1AN negatively regulates the function of notch intracellular domain (NICD), accelerating myogenic differentiation. Interacts (via NICD) with SNAI1 (via zinc fingers); the interaction induces SNAI1 degradation via MDM2-mediated ubiquitination and inhibits SNAI1-induced cell invasion. Interacts (via NICD) with MDM2A. Interacts (via NICD) with BCL6; the interaction decreases MAML1 recruitment by NOTCH1 NICD on target genes DNA and inhibits NOTCH1 transactivation activity. Interacts with THBS4. Interacts (via the EGF-like repeat region) with CCN3 (via CTCK domain). Interacts (via EGF-like domains) with DLL4 (via N-terminal DSL and MNNL domains). Interacts with ZMIZ1. Interacts (via NICD domain) with MEGF10 (via the cytoplasmic domain). Interacts with DLL1 and JAG1. Interacts (via NICD domain) with PRAG1. Forms a complex with PRAG1, N1ICD and MAML1, in a MAML1-dependent manner. Interacts (via transmembrane region) with PSEN1; the interaction is direct. Interacts with ZFP64. In terms of processing, synthesized in the endoplasmic reticulum as an inactive form which is proteolytically cleaved by a furin-like convertase in the trans-Golgi network before it reaches the plasma membrane to yield an active, ligand-accessible form. Cleavage results in a C-terminal fragment N(TM) and a N-terminal fragment N(EC). Following ligand binding, it is cleaved by ADAM17 to yield a membrane-associated intermediate fragment called notch extracellular truncation (NEXT). Following endocytosis, this fragment is then cleaved by one of the catalytic subunits of gamma-secretase (PSEN1 or PSEN2) to release a Notch-derived peptide containing the intracellular domain (NICD) from the membrane. Post-translationally, phosphorylated. O-glycosylated on the EGF-like domains. O-glucosylated at Ser-435 by KDELC1 and KDELC2. Contains both O-linked fucose and O-linked glucose in the EGF-like domains 11, 12 and 13, which are interacting with the residues on DLL4. O-linked glycosylation by GALNT11 is involved in determination of left/right symmetry: glycosylation promotes activation of NOTCH1, possibly by promoting cleavage by ADAM17, modulating the balance between motile and immotile (sensory) cilia at the left-right organiser (LRO). MFNG-, RFNG- and LFNG-mediated modification of O-fucose residues at specific EGF-like domains results in inhibition of its activation by JAG1 and enhancement of its activation by DLL1 via an increased binding to DLL1. In terms of processing, ubiquitinated. Undergoes 'Lys-29'-linked polyubiquitination by ITCH; promotes the lysosomal degradation of non-activated internalized NOTCH1. Deubiquitination by USP12 is required for transport of internalized non-activated receptor from late endosomes to lysosomes for degradation. Monoubiquitination at Lys-1749 is required for activation by gamma-secretase cleavage, it promotes interaction with AAK1, which stabilizes it. Deubiquitination by EIF3F is necessary for nuclear import of activated Notch. Post-translationally, hydroxylated at Asn-1945 and Asn-2012 by HIF1AN. Hydroxylation reduces affinity for HI1AN and may thus indirectly modulate negative regulation of NICD. As to expression, expressed in the brain, kidney and spleen. Expressed in postnatal central nervous system (CNS) germinal zones and, in early postnatal life, within numerous cells throughout the CNS. Found in both subventricular and ventricular germinal zones.

It localises to the cell membrane. Its subcellular location is the late endosome membrane. The protein resides in the nucleus. Its function is as follows. Functions as a receptor for membrane-bound ligands Jagged-1 (JAG1), Jagged-2 (JAG2) and Delta-1 (DLL1) to regulate cell-fate determination. Upon ligand activation through the released notch intracellular domain (NICD) it forms a transcriptional activator complex with RBPJ/RBPSUH and activates genes of the enhancer of split locus. Affects the implementation of differentiation, proliferation and apoptotic programs. Involved in angiogenesis; negatively regulates endothelial cell proliferation and migration and angiogenic sprouting. Involved in the maturation of both CD4(+) and CD8(+) cells in the thymus. Important for follicular differentiation and possibly cell fate selection within the follicle. During cerebellar development, functions as a receptor for neuronal DNER and is involved in the differentiation of Bergmann glia. Represses neuronal and myogenic differentiation. May play an essential role in postimplantation development, probably in some aspect of cell specification and/or differentiation. May be involved in mesoderm development, somite formation and neurogenesis. May enhance HIF1A function by sequestering HIF1AN away from HIF1A. Required for the THBS4 function in regulating protective astrogenesis from the subventricular zone (SVZ) niche after injury. Involved in determination of left/right symmetry by modulating the balance between motile and immotile (sensory) cilia at the left-right organiser (LRO). This chain is Neurogenic locus notch homolog protein 1 (Notch1), found in Rattus norvegicus (Rat).